We begin with the raw amino-acid sequence, 225 residues long: Transcriptional activator protein CUP2 (225 aa).

Residues 1-40 (MVVINGVKYACETCIRGHRAAQCTHTDGPLQMIRRKGRPS) constitute a DNA-binding region (copper-fist). Positions 1-108 (MVVINGVKYA…KSKGGSCHRR (108 aa)) are binds copper and DNA. Zn(2+) is bound by residues cysteine 11, cysteine 14, cysteine 23, and histidine 25. Residues 109 to 225 (ANDEAAHVNG…QVSSHNSHSQ (117 aa)) are required for transcriptional activation.

It is found in the nucleus. Functionally, trans-acting regulatory protein that activates transcription of the CUP1 gene (metallothionein) in response to copper ions. Binds to the CUP1 UAS sequence 5'-GCTTCTTTTCCGCTGA-3'. Binds DNA only in presence of copper or silver. Copper seems to alter the conformation of the protein. The chain is Transcriptional activator protein CUP2 (CUP2) from Saccharomyces cerevisiae (strain ATCC 204508 / S288c) (Baker's yeast).